Here is a 434-residue protein sequence, read N- to C-terminus: Sodium/bile acid cotransporter 5 (434 aa).

An N-terminal signal peptide occupies residues 1–18 (MSGNFFIFLLLLVTPGEA). Over 19–129 (KKSFLSFLNI…VRVFRQTDDS (111 aa)) the chain is Extracellular. N-linked (GlcNAc...) asparagine glycosylation is found at Asn-73 and Asn-96. The helical transmembrane segment at 130–150 (LLQAPIHVDSSIFLLVLSMIL) threads the bilayer. The Cytoplasmic portion of the chain corresponds to 151-172 (LNKCAFGCKIEFQVLQTVWKRP). A helical transmembrane segment spans residues 173–193 (LPILLGVVIQFFLMPFCGFLL). At 194-203 (SQILGLPKAQ) the chain is on the extracellular side. The chain crosses the membrane as a helical span at residues 204–226 (AFGFVMTCTCPGGGGGYLFALLL). Over 227-232 (EGDVTL) the chain is Cytoplasmic. The chain crosses the membrane as a helical span at residues 233 to 255 (AILMTCTSTSLALIMMPVNSYFY). The Extracellular portion of the chain corresponds to 256–268 (SRLLGLAGAFHVP). The helical transmembrane segment at 269 to 289 (VLKIVSTLLFILMPMSTGVII) threads the bilayer. Residues 290 to 306 (KHKMPAKAICLERVVRP) lie on the Cytoplasmic side of the membrane. Residues 307–327 (LSLTLMFVGIYLAFRMGLVFL) traverse the membrane as a helical segment. The Extracellular portion of the chain corresponds to 328 to 331 (RMAN). Residues 332 to 352 (LEVFLLGLLVPALGLLFGYSL) traverse the membrane as a helical segment. Topologically, residues 353-365 (AKVYLLPLPVCKT) are cytoplasmic. Residues 366–386 (VALETGMLNSFLALAIIQLSF) traverse the membrane as a helical segment. Residues 387–395 (SQPKAHEAS) lie on the Extracellular side of the membrane. A helical membrane pass occupies residues 396-416 (VAPFTVAMCSSCEMLLLLLVY). At 417 to 434 (KAKRRPSLSTEYEKTPLV) the chain is on the cytoplasmic side.

It belongs to the bile acid:sodium symporter (BASS) (TC 2.A.28) family.

The protein resides in the membrane. The polypeptide is Sodium/bile acid cotransporter 5 (Slc10a5) (Mus musculus (Mouse)).